The primary structure comprises 274 residues: NH(3)-dependent NAD(+) synthetase (274 aa).

46 to 53 (GISGGQDS) serves as a coordination point for ATP. Asp-52 is a binding site for Mg(2+). Arg-140 lines the deamido-NAD(+) pocket. Thr-160 is a binding site for ATP. Residue Glu-165 participates in Mg(2+) binding. Deamido-NAD(+)-binding residues include Lys-173 and Asp-180. Lys-189 and Thr-211 together coordinate ATP. A deamido-NAD(+)-binding site is contributed by 260-261 (HK).

Belongs to the NAD synthetase family. As to quaternary structure, homodimer.

It carries out the reaction deamido-NAD(+) + NH4(+) + ATP = AMP + diphosphate + NAD(+) + H(+). It participates in cofactor biosynthesis; NAD(+) biosynthesis; NAD(+) from deamido-NAD(+) (ammonia route): step 1/1. Functionally, catalyzes the ATP-dependent amidation of deamido-NAD to form NAD. Uses ammonia as a nitrogen source. This chain is NH(3)-dependent NAD(+) synthetase, found in Streptococcus pyogenes serotype M6 (strain ATCC BAA-946 / MGAS10394).